The chain runs to 202 residues: Syndecan-2 (202 aa).

Residues 1 to 18 form the signal peptide; it reads MQRAWILLTLGLMACVSA. Residues 19-145 lie on the Extracellular side of the membrane; the sequence is ETRTELTSDK…HSDNLFKRTE (127 aa). Residues Ser-41, Ser-55, and Ser-57 are each glycosylated (O-linked (Xyl...) (glycosaminoglycan) serine). 2 disordered regions span residues 41 to 63 and 88 to 118; these read SGVYPIDDDDYSSASGSGADEDI and ETMTLKTQSITPAQTESPEETDKEEVDISEA. Residues 91–103 are compositionally biased toward polar residues; sequence TLKTQSITPAQTE. Residues 104–117 show a composition bias toward acidic residues; sequence SPEETDKEEVDISE. Ser-116 is modified (phosphoserine). Residues 146-170 traverse the membrane as a helical segment; sequence VLAAVIAGGVIGFLFAIFLILLLVY. The Cytoplasmic portion of the chain corresponds to 171-202; that stretch reads RMRKKDEGSYDLGERKPSSAAYQKAPTKEFYA. Positions 179-202 are disordered; the sequence is SYDLGERKPSSAAYQKAPTKEFYA. Phosphoserine is present on Ser-188.

Belongs to the syndecan proteoglycan family. In terms of assembly, interacts (via cytoplasmic domain) with SARM1. Forms a complex with SDCBP and PDCD6IP. In terms of processing, O-glycosylated; contains both heparan sulfate and chondroitin sulfate. Post-translationally, phosphorylated on serine residues. As to expression, preferential expression in cells of mesenchymal origin.

It is found in the membrane. In terms of biological role, cell surface proteoglycan which regulates dendritic arbor morphogenesis. The sequence is that of Syndecan-2 (Sdc2) from Mus musculus (Mouse).